The following is a 956-amino-acid chain: DNA replication helicase (956 aa).

Position 120–127 (120–127 (GTAGAGKT)) interacts with ATP. The tract at residues 658–694 (PINNHVDADSSQGGQSVPVSQRMEHGQEETHDIPCLS) is disordered. The span at 667 to 678 (SSQGGQSVPVSQ) shows a compositional bias: low complexity. The span at 679–694 (RMEHGQEETHDIPCLS) shows a compositional bias: basic and acidic residues.

It belongs to the herpesviridae helicase family. Associates with the primase and the primase-associated factor to form the helicase-primase complex.

It localises to the host nucleus. Functionally, component of the helicase/primase complex. Unwinds the DNA at the replication forks and generates single-stranded DNA for both leading and lagging strand synthesis. The primase synthesizes short RNA primers on the lagging strand that the polymerase elongates using dNTPs. Possesses helicase-like motifs and therefore may act as the helicase subunit of the complex. This Human cytomegalovirus (strain Merlin) (HHV-5) protein is DNA replication helicase.